A 198-amino-acid chain; its full sequence is Superoxide dismutase [Fe] (198 aa).

His27, His74, Asp158, and His162 together coordinate Fe cation.

The protein belongs to the iron/manganese superoxide dismutase family. In terms of assembly, homodimer. It depends on Fe cation as a cofactor.

The protein localises to the cytoplasm. It carries out the reaction 2 superoxide + 2 H(+) = H2O2 + O2. Destroys superoxide anion radicals which are normally produced within the cells and which are toxic to biological systems. The sequence is that of Superoxide dismutase [Fe] (SODB) from Plasmodium falciparum (isolate HB3).